The primary structure comprises 157 residues: Small ribosomal subunit protein uS7 (157 aa).

The protein belongs to the universal ribosomal protein uS7 family. As to quaternary structure, part of the 30S ribosomal subunit. Contacts proteins S9 and S11.

In terms of biological role, one of the primary rRNA binding proteins, it binds directly to 16S rRNA where it nucleates assembly of the head domain of the 30S subunit. Is located at the subunit interface close to the decoding center, probably blocks exit of the E-site tRNA. This chain is Small ribosomal subunit protein uS7, found in Borrelia duttonii (strain Ly).